Consider the following 618-residue polypeptide: MAISMASPLSSWPWAFLGSYKYLLYGPVVGKVVQEWREQGRLPLGTSWCLHLILLLALRSLTMLFFTRRRRVVDDGVDFRQIDTEWDWDNMVIMQTLIAAVLVTSRVFPATSDLSAWDLRGWAIAVVLHVAVSEPAFYWAHRALHLGPLFSRYHSLHHSFQATQALTAGFVTPLESLILTLVAWAPLAGAFMAGHGSVSLVYGHILLFDYLRSMGYSNVEVISHKTFQDFPFLRYLIYTPSYLSLHHREKDSNFCLFMPLFDALGGTLNPKSWQLQKEVDLGKNHRVPDFVFLVHVVDVVSSMHVPFAFRACSSLPFATHLVLLPLWPIAFGFMLLQWFCSKTFTVSFYKLRGFLHQTWSVPRYGFQYFIPSAKKGINEMIELAILRADKMGVKVLSLAALNKNEALNGGGTLFVRKHPDLRVRVVHGNTLTAAVILNEIPGDVAEVFLTGATSKLGRAIALYLCRKKIRVLMLTLSTERFMNIQREAPAEFQQYLVQVTKYQAAQNCKTWIVGKWLSPREQRWAPAGTHFHQFVVPPIIGFRRDCTYGKLAAMRLPEDVEGLGTCEYTMGRGVVHACHAGGVVHFLEGWDHHEVGAIDVDRIDAVWNAALRHGLTPA.

A run of 7 helical transmembrane segments spans residues 9–29, 46–66, 91–111, 121–141, 174–194, 289–309, and 315–335; these read LSSW…GPVV, TSWC…MLFF, MVIM…FPAT, GWAI…YWAH, LESL…FMAG, DFVF…PFAF, and LPFA…GFML. Residues 127–267 form the Fatty acid hydroxylase domain; that stretch reads VLHVAVSEPA…MPLFDALGGT (141 aa).

It belongs to the sterol desaturase family. Homodimer. In terms of tissue distribution, expressed in germinating seeds and stamens.

The protein localises to the endoplasmic reticulum membrane. The catalysed reaction is a long-chain fatty aldehyde + 2 NADPH + O2 + H(+) = a long-chain alkane + formate + 2 NADP(+) + H2O. In terms of biological role, aldehyde decarbonylase involved in the conversion of aldehydes to alkanes. Core component of a very-long-chain alkane synthesis complex. The protein is Very-long-chain aldehyde decarbonylase GL1-3 of Oryza sativa subsp. japonica (Rice).